Consider the following 62-residue polypeptide: Large ribosomal subunit protein uL30 (62 aa).

This sequence belongs to the universal ribosomal protein uL30 family. As to quaternary structure, part of the 50S ribosomal subunit.

This Paracoccus denitrificans (strain Pd 1222) protein is Large ribosomal subunit protein uL30.